The sequence spans 258 residues: Putative cysteine-rich repeat secretory protein 16 (258 aa).

Positions 1–30 (MYYSSPTCFVLITIFAVVVTQLIFMRTVSS) are cleaved as a signal peptide. Gnk2-homologous domains follow at residues 37–139 (YLNH…PFDT) and 144–247 (DKDN…LYPF).

This sequence belongs to the cysteine-rich repeat secretory protein family.

The protein resides in the secreted. In Arabidopsis thaliana (Mouse-ear cress), this protein is Putative cysteine-rich repeat secretory protein 16 (CRRSP16).